Here is a 603-residue protein sequence, read N- to C-terminus: Elongation factor 4 (603 aa).

Residues 7 to 191 (DNIRNFSIVA…AIVTRLPPPK (185 aa)) form the tr-type G domain. GTP is bound by residues 19–24 (DHGKST) and 138–141 (NKVD).

The protein belongs to the TRAFAC class translation factor GTPase superfamily. Classic translation factor GTPase family. LepA subfamily.

The protein resides in the cell inner membrane. It catalyses the reaction GTP + H2O = GDP + phosphate + H(+). Functionally, required for accurate and efficient protein synthesis under certain stress conditions. May act as a fidelity factor of the translation reaction, by catalyzing a one-codon backward translocation of tRNAs on improperly translocated ribosomes. Back-translocation proceeds from a post-translocation (POST) complex to a pre-translocation (PRE) complex, thus giving elongation factor G a second chance to translocate the tRNAs correctly. Binds to ribosomes in a GTP-dependent manner. The sequence is that of Elongation factor 4 from Rhodopseudomonas palustris (strain BisA53).